Consider the following 115-residue polypeptide: Photosystem II reaction center Psb28 protein (115 aa).

This sequence belongs to the Psb28 family. In terms of assembly, part of the photosystem II complex.

It localises to the plastid. It is found in the chloroplast thylakoid membrane. This chain is Photosystem II reaction center Psb28 protein, found in Phaeodactylum tricornutum (strain CCAP 1055/1).